An 85-amino-acid polypeptide reads, in one-letter code: Large ribosomal subunit protein bL27 (85 aa).

The segment at 1-21 (MAHKKAGGSTRNGRDSRGKRL) is disordered.

The protein belongs to the bacterial ribosomal protein bL27 family.

The polypeptide is Large ribosomal subunit protein bL27 (Blochmanniella floridana).